A 555-amino-acid chain; its full sequence is MILAGRAPSNTSTLMKFYSLLLYSLLFSFPFLYHPLPLPSYLHHTINLTHSLPAASNPSLANNCWLCISLSSSAYIAVPTLQTDRATSPVSLHLRTSFNSPHLYPPEELIYFLDRSSKTSPDISHQPAAALLHIYLKNLSPYINSTPPIFGPLTTQTTIPVAAPLCISRQRPTGIPLGNISPSRCSFTLHLQSPTTHVTETIGVFQLHIIDKPSINTDKLKNVSSNYCLGRHLPYISLHPWLPSPCSSDSPPRPSSCLLTPSPQNNSERLLVDTQRFLIHHENRTSSSMQLAHQSPLQPLTAAALAGSLGVWVQDTPFSTPSHPFSLHLQFCLTQGLFFLCGSSTYMCLPANWTGTCTLVFLTPKIQFANGTKELPVPLMTLTPQKRVIPLIPLMVGLGLSASTIALSTGIAGISTSVTTFRSPSNDFSASITDISQTLSVLQAQVDSLAAVVLQNRRGLGLSILLNEECCFYLNQSGLVYENIKKLKDRAQKLANQASNYAESPWALSNWMSWVLPILSPLIPIFLLLLFGPCIFHLVSQFIQNRIQAITNHSI.

Residues 1-35 (MILAGRAPSNTSTLMKFYSLLLYSLLFSFPFLYHP) form the signal peptide. Over 36 to 515 (LPLPSYLHHT…WALSNWMSWV (480 aa)) the chain is Extracellular. N-linked (GlcNAc...) asparagine glycosylation is present at Asn-47. A CXXC motif is present at residues 64-67 (CWLC). 5 N-linked (GlcNAc...) asparagine glycosylation sites follow: Asn-222, Asn-265, Asn-283, Asn-352, and Asn-370. Positions 388–408 (VIPLIPLMVGLGLSASTIALS) are fusion peptide. The N-linked (GlcNAc...) asparagine glycan is linked to Asn-475. A helical membrane pass occupies residues 516-536 (LPILSPLIPIFLLLLFGPCIF). At 537–555 (HLVSQFIQNRIQAITNHSI) the chain is on the cytoplasmic side.

This sequence belongs to the gamma type-C retroviral envelope protein family. HERV class-I H env subfamily. The surface (SU) and transmembrane (TM) proteins form a heterodimer. SU and TM are attached by noncovalent interactions or by a labile interchain disulfide bond. In terms of processing, specific enzymatic cleavages in vivo yield the mature SU and TM proteins. In terms of tissue distribution, low expression in testis.

Its subcellular location is the virion. It localises to the cell membrane. Its function is as follows. Retroviral envelope proteins mediate receptor recognition and membrane fusion during early infection. Endogenous envelope proteins may have kept, lost or modified their original function during evolution. This endogenous envelope protein has lost its original fusogenic properties. SU mediates receptor recognition. Functionally, TM anchors the envelope heterodimer to the viral membrane through one transmembrane domain. The other hydrophobic domain, called fusion peptide, mediates fusion of the viral membrane with the target cell membrane. In Homo sapiens (Human), this protein is HERV-H_2q24.1 provirus ancestral Env polyprotein.